The sequence spans 168 residues: Small ribosomal subunit protein uS5 (168 aa).

Residues isoleucine 17 to valine 80 form the S5 DRBM domain.

It belongs to the universal ribosomal protein uS5 family. As to quaternary structure, part of the 30S ribosomal subunit. Contacts proteins S4 and S8.

Functionally, with S4 and S12 plays an important role in translational accuracy. Located at the back of the 30S subunit body where it stabilizes the conformation of the head with respect to the body. The protein is Small ribosomal subunit protein uS5 of Lactobacillus helveticus (strain DPC 4571).